A 205-amino-acid polypeptide reads, in one-letter code: MSLIPEIDAFLGCPTPDAWIEAALADQETLLIDHKNCEFKAASTALSLIAKYNTHLDLINMMSRLAREELVHHEQVLRLMKRRGVPLRPVSAGRYASGLRRLVRAHEPVKLVDTLVVGAFIEARSCERFAALVPHLDEELGRFYHGLLKSEARHYQGYLKLAHNYGDEADIARCVELVRAAEMELIQSPDQELRFHSGIPQALAA.

6 residues coordinate Fe cation: Glu38, Glu69, His72, Glu122, Glu151, and His154.

It belongs to the MiaE family. As to quaternary structure, homodimer. Requires Fe cation as cofactor.

It catalyses the reaction 2-methylsulfanyl-N(6)-dimethylallyladenosine(37) in tRNA + AH2 + O2 = N(6)-[(2E)-4-hydroxy-3-methylbut-2-en-1-yl]-2-(methylsulfanyl)adenosine(37) in tRNA + A + H2O. Its pathway is tRNA modification; 2-methylthio-N-6-(cis-hydroxy)isopentenyl adenosine-tRNA biosynthesis. Functionally, involved in specific tRNA modification. Catalyzes the oxygen-dependent hydroxylation of 2-methylthio-N-6-isopentenyl adenosine (ms2i6A) to produce 2-methylthio-N-6-(cis-hydroxy)isopentenyl adenosine (ms2io6A) at position 37 in tRNAs. This chain is tRNA 2-(methylsulfanyl)-N(6)-isopentenyladenosine(37) hydroxylase, found in Pseudomonas putida (strain ATCC 47054 / DSM 6125 / CFBP 8728 / NCIMB 11950 / KT2440).